Reading from the N-terminus, the 248-residue chain is uncharacterized protein (248 aa).

Position 9-33 (9-33) interacts with NADP(+); the sequence is IITGASSGIGKATALLLAEKGAKLV. Ser-141 contributes to the substrate binding site. Catalysis depends on Tyr-154, which acts as the Proton acceptor.

The protein belongs to the short-chain dehydrogenases/reductases (SDR) family.

This is an uncharacterized protein from Listeria monocytogenes serovar 1/2a (strain ATCC BAA-679 / EGD-e).